The following is a 451-amino-acid chain: Phosphoglucosamine mutase (451 aa).

The Phosphoserine intermediate role is filled by Ser102. Residues Ser102, Asp243, Asp245, and Asp247 each coordinate Mg(2+). Residue Ser102 is modified to Phosphoserine.

The protein belongs to the phosphohexose mutase family. Mg(2+) is required as a cofactor. In terms of processing, activated by phosphorylation.

It carries out the reaction alpha-D-glucosamine 1-phosphate = D-glucosamine 6-phosphate. Functionally, catalyzes the conversion of glucosamine-6-phosphate to glucosamine-1-phosphate. The chain is Phosphoglucosamine mutase from Brucella abortus (strain 2308).